Reading from the N-terminus, the 577-residue chain is Outer spore wall assembly protein SHE10 (577 aa).

A signal peptide spans 1-23 (MGKLIKLITTLTVLVSLLQYCCE). Coiled-coil stretches lie at residues 379-416 (NETR…ENVE) and 513-561 (ILRS…EEDV). The segment covering 525–545 (RERKERERKEREKAAAEEFQR) has biased composition (basic and acidic residues). A disordered region spans residues 525 to 577 (RERKERERKEREKAAAEEFQRQQELLRQQEEEDEEDVSYTSTSTITTTTTMTL). The segment covering 562-577 (SYTSTSTITTTTTMTL) has biased composition (low complexity).

It belongs to the SHE10 family. In terms of assembly, component of the mitochondria-localized RNase mitochondrial RNA-processing (RNase MRP) composed of one single RNA encoded by the NME1 gene and at least 31 proteins. Absent in the nucleus-localized RNase MRP (NuMRP).

Its subcellular location is the mitochondrion. In terms of biological role, involved in spore wall assembly. May be a component of the mitochondrial RNase MRP (MtMRP), a ribonucleoprotein endoribonuclease involved in the cleaving RNA transcripts to generate primers for DNA replication in mitochondria. The chain is Outer spore wall assembly protein SHE10 from Saccharomyces cerevisiae (strain YJM789) (Baker's yeast).